Consider the following 353-residue polypeptide: Photosystem II protein D1 (353 aa).

Thr-2 bears the N-acetylthreonine mark. A Phosphothreonine modification is found at Thr-2. Transmembrane regions (helical) follow at residues 29 to 46, 118 to 133, and 142 to 156; these read YIGW…TATS, HFLL…EWEL, and WIAV…AATA. His-118 is a chlorophyll a binding site. Residue Tyr-126 coordinates pheophytin a. Asp-170 and Glu-189 together coordinate [CaMn4O5] cluster. The helical transmembrane segment at 197-218 threads the bilayer; it reads FHMLGVAGVFGGSLFSAMHGSL. His-198 is a binding site for chlorophyll a. A quinone-binding positions include His-215 and 264-265; that span reads SF. His-215 provides a ligand contact to Fe cation. His-272 contacts Fe cation. A helical transmembrane segment spans residues 274-288; sequence FLAAWPVVGIWFTAL. The [CaMn4O5] cluster site is built by His-332, Glu-333, Asp-342, and Ala-344. Positions 345 to 353 are excised as a propeptide; sequence AVEAPSING.

It belongs to the reaction center PufL/M/PsbA/D family. As to quaternary structure, PSII is composed of 1 copy each of membrane proteins PsbA, PsbB, PsbC, PsbD, PsbE, PsbF, PsbH, PsbI, PsbJ, PsbK, PsbL, PsbM, PsbT, PsbX, PsbY, PsbZ, Psb30/Ycf12, at least 3 peripheral proteins of the oxygen-evolving complex and a large number of cofactors. It forms dimeric complexes. The D1/D2 heterodimer binds P680, chlorophylls that are the primary electron donor of PSII, and subsequent electron acceptors. It shares a non-heme iron and each subunit binds pheophytin, quinone, additional chlorophylls, carotenoids and lipids. D1 provides most of the ligands for the Mn4-Ca-O5 cluster of the oxygen-evolving complex (OEC). There is also a Cl(-1) ion associated with D1 and D2, which is required for oxygen evolution. The PSII complex binds additional chlorophylls, carotenoids and specific lipids. serves as cofactor. Tyr-161 forms a radical intermediate that is referred to as redox-active TyrZ, YZ or Y-Z. Post-translationally, C-terminally processed by CTPA; processing is essential to allow assembly of the oxygen-evolving complex and thus photosynthetic growth.

Its subcellular location is the plastid. It localises to the chloroplast thylakoid membrane. It carries out the reaction 2 a plastoquinone + 4 hnu + 2 H2O = 2 a plastoquinol + O2. In terms of biological role, photosystem II (PSII) is a light-driven water:plastoquinone oxidoreductase that uses light energy to abstract electrons from H(2)O, generating O(2) and a proton gradient subsequently used for ATP formation. It consists of a core antenna complex that captures photons, and an electron transfer chain that converts photonic excitation into a charge separation. The D1/D2 (PsbA/PsbD) reaction center heterodimer binds P680, the primary electron donor of PSII as well as several subsequent electron acceptors. In Chloranthus spicatus (Chulantree), this protein is Photosystem II protein D1.